The sequence spans 259 residues: Ribosomal RNA small subunit methyltransferase A (259 aa).

S-adenosyl-L-methionine-binding residues include Asn-13, Leu-15, Gly-40, Glu-61, Asp-85, and Asn-103.

The protein belongs to the class I-like SAM-binding methyltransferase superfamily. rRNA adenine N(6)-methyltransferase family. RsmA subfamily.

The protein resides in the cytoplasm. It catalyses the reaction adenosine(1518)/adenosine(1519) in 16S rRNA + 4 S-adenosyl-L-methionine = N(6)-dimethyladenosine(1518)/N(6)-dimethyladenosine(1519) in 16S rRNA + 4 S-adenosyl-L-homocysteine + 4 H(+). Functionally, specifically dimethylates two adjacent adenosines (A1518 and A1519) in the loop of a conserved hairpin near the 3'-end of 16S rRNA in the 30S particle. May play a critical role in biogenesis of 30S subunits. The protein is Ribosomal RNA small subunit methyltransferase A of Neisseria gonorrhoeae (strain NCCP11945).